Reading from the N-terminus, the 122-residue chain is Large ribosomal subunit protein bL12 (122 aa).

Belongs to the bacterial ribosomal protein bL12 family. In terms of assembly, homodimer. Part of the ribosomal stalk of the 50S ribosomal subunit. Forms a multimeric L10(L12)X complex, where L10 forms an elongated spine to which 2 to 4 L12 dimers bind in a sequential fashion. Binds GTP-bound translation factors.

In terms of biological role, forms part of the ribosomal stalk which helps the ribosome interact with GTP-bound translation factors. Is thus essential for accurate translation. This chain is Large ribosomal subunit protein bL12, found in Vibrio parahaemolyticus serotype O3:K6 (strain RIMD 2210633).